A 148-amino-acid polypeptide reads, in one-letter code: [Ribosomal protein bS18]-alanine N-acetyltransferase (148 aa).

In terms of domain architecture, N-acetyltransferase spans 2–147; that stretch reads NTISSLETTD…DAIIMALPIS (146 aa). An acetyl-CoA-binding site is contributed by 69–71; that stretch reads IAV. The Proton acceptor role is filled by glutamate 103. Residue asparagine 108 coordinates acetyl-CoA. Tyrosine 115 functions as the Proton donor in the catalytic mechanism.

This sequence belongs to the acetyltransferase family. RimI subfamily.

The protein resides in the cytoplasm. The enzyme catalyses N-terminal L-alanyl-[ribosomal protein bS18] + acetyl-CoA = N-terminal N(alpha)-acetyl-L-alanyl-[ribosomal protein bS18] + CoA + H(+). Its function is as follows. Acetylates the N-terminal alanine of ribosomal protein bS18. This is [Ribosomal protein bS18]-alanine N-acetyltransferase from Escherichia coli O157:H7.